The sequence spans 404 residues: Chorismate synthase (404 aa).

NADP(+) is bound by residues R40 and R46. FMN-binding positions include 136-138 (RAS), 257-258 (QA), G301, 316-320 (KPIST), and R342.

Belongs to the chorismate synthase family. In terms of assembly, homotetramer. FMNH2 serves as cofactor.

The catalysed reaction is 5-O-(1-carboxyvinyl)-3-phosphoshikimate = chorismate + phosphate. It functions in the pathway metabolic intermediate biosynthesis; chorismate biosynthesis; chorismate from D-erythrose 4-phosphate and phosphoenolpyruvate: step 7/7. In terms of biological role, catalyzes the anti-1,4-elimination of the C-3 phosphate and the C-6 proR hydrogen from 5-enolpyruvylshikimate-3-phosphate (EPSP) to yield chorismate, which is the branch point compound that serves as the starting substrate for the three terminal pathways of aromatic amino acid biosynthesis. This reaction introduces a second double bond into the aromatic ring system. In Mycolicibacterium vanbaalenii (strain DSM 7251 / JCM 13017 / BCRC 16820 / KCTC 9966 / NRRL B-24157 / PYR-1) (Mycobacterium vanbaalenii), this protein is Chorismate synthase.